Here is a 1380-residue protein sequence, read N- to C-terminus: MAQTLSFNGRRRVRKFFGKIPEVAEMPNLIEVQKASYDQFLMVEEPKGGRPDEGLQSVFKSVFPITDFSGASMLEFVSYEFEPPKFDVDECRQRDLTYAAPLKVTLRLIVFDIDEDTGAKSIKDIKEQSVYMGDMPLMTNNGTFIVNGTERVIVSQMHRSPGVFFDHDKGKSHSSGKLLFAARVIPYRGSWLDIEFDAKDIVYARIDRRRKIPVTSLLMALGMDGEEILSTFYTKSLYERSGDGWRIPFNAETLKGAKTVTDMIDADTGEVVVEGGKKLTPRLLRQLQDKGLKALKATDEDLYGLFLAEDIVNFQTGEIYLEAGDEIDEKTLPVILKAGFDEIPVLGIDHINVGAYIRNTLSADKNENRQDALFDIYRVMRPGEPPTMDSAEAMFNSLFFDAERYDLSAVGRVKMNMRLDLEVADTVRVLRKDDILAVVKMLVELRDGKGEIDDIDNLGNRRVRSVGELMENQYRLGLLRMERAIKERMSSIEIDTVMPQDLINAKPAAAAVREFFGSSQLSQFMDQVNPLSEITHKRRLSALGPGGLTRERAGFEVRDVHPTHYGRICPIETPEGPNIGLINSLATFARVNKYGFIESPYRRIIDGKVTTDVLYLSAMEEAKYYVAQANAELDAEGSFIEEFVVCRHAGEVMLAPRDNINLMDVSPKQLVSVAAALIPFLENDDANRALMGSNMQRQAVPLLRAEAPFVGTGMEPVVARDSGAAIGARRGGVVDQVDATRIVIRATEDLDPSKSGVDIYRLMKFQRSNQNTCVNQRPLVTVGDFVNKGDILADGPSTDLGDLALGRNVLVAFMPWNGYNYEDSILLSERIVADDVFTSIHIEEFEVMARDTKLGPEEITRDIPNVSEEALKNLDEAGIVYIGAEVQPGDILVGKITPKGESPMTPEEKLLRAIFGEKASDVRDTSMRMPPGTYGTVVEVRVFNRHGVEKDERAMAIEREEIERLAKDRDDEQAILDRNVYGRLIEMLRGQVALAGPKNFKKGTELSNAVVSEYPRSQWWMFAVEDEKVQGELEALRGQYDESKSHLEQRFMDKVEKVQRGDEMPPGVMKMVKVFVAVKRKIQPGDKMAGRHGNKGVVSRIVPVEDMPFLEDGTHVDIVLNPLGVPSRMNVGQILETHLGWACAGMGRQIGELIEAYKANGNIEPLRKTIDMVVGDGPKSDDVHNYDDASVLRLADQWKRGVSIATPVFDGAGEADVNEMLAMAGLKETGQSTLYDGRTGEQFDRQVTVGYIYMLKLNHLVDDKIHARSIGPYSLVTQQPLGGKAQFGGQRFGEMEVWALEAYGAAYTLQEMLTVKSDDVAGRTKVYEAIVRGDDTFEAGIPESFNVLVKEMRSLGLSVELENSKVDDLQAAGQLPDAAE.

The protein belongs to the RNA polymerase beta chain family. The RNAP catalytic core consists of 2 alpha, 1 beta, 1 beta' and 1 omega subunit. When a sigma factor is associated with the core the holoenzyme is formed, which can initiate transcription.

The enzyme catalyses RNA(n) + a ribonucleoside 5'-triphosphate = RNA(n+1) + diphosphate. DNA-dependent RNA polymerase catalyzes the transcription of DNA into RNA using the four ribonucleoside triphosphates as substrates. This is DNA-directed RNA polymerase subunit beta from Rhizobium rhizogenes (strain K84 / ATCC BAA-868) (Agrobacterium radiobacter).